The sequence spans 295 residues: Ribose-phosphate pyrophosphokinase (295 aa).

ATP is bound by residues 46–48 (DGE) and 101–102 (RQ). Residues His132 and Asp171 each coordinate Mg(2+). Lys194 is a catalytic residue. D-ribose 5-phosphate contacts are provided by Arg196 and Asp220.

It belongs to the ribose-phosphate pyrophosphokinase family. Class III (archaeal) subfamily. Mg(2+) is required as a cofactor.

It is found in the cytoplasm. It catalyses the reaction D-ribose 5-phosphate + ATP = 5-phospho-alpha-D-ribose 1-diphosphate + AMP + H(+). It participates in metabolic intermediate biosynthesis; 5-phospho-alpha-D-ribose 1-diphosphate biosynthesis; 5-phospho-alpha-D-ribose 1-diphosphate from D-ribose 5-phosphate (route I): step 1/1. In terms of biological role, involved in the biosynthesis of the central metabolite phospho-alpha-D-ribosyl-1-pyrophosphate (PRPP) via the transfer of pyrophosphoryl group from ATP to 1-hydroxyl of ribose-5-phosphate (Rib-5-P). In Methanosarcina mazei (strain ATCC BAA-159 / DSM 3647 / Goe1 / Go1 / JCM 11833 / OCM 88) (Methanosarcina frisia), this protein is Ribose-phosphate pyrophosphokinase.